Reading from the N-terminus, the 485-residue chain is ATP synthase subunit beta, cyanelle (485 aa).

162–169 (GGAGVGKT) contacts ATP.

This sequence belongs to the ATPase alpha/beta chains family. As to quaternary structure, F-type ATPases have 2 components, CF(1) - the catalytic core - and CF(0) - the membrane proton channel. CF(1) has five subunits: alpha(3), beta(3), gamma(1), delta(1), epsilon(1). CF(0) has four main subunits: a(1), b(1), b'(1) and c(9-12).

It is found in the plastid. The protein resides in the cyanelle thylakoid membrane. It catalyses the reaction ATP + H2O + 4 H(+)(in) = ADP + phosphate + 5 H(+)(out). Functionally, produces ATP from ADP in the presence of a proton gradient across the membrane. The catalytic sites are hosted primarily by the beta subunits. This is ATP synthase subunit beta, cyanelle from Cyanophora paradoxa.